Reading from the N-terminus, the 432-residue chain is Trigger factor (432 aa).

The PPIase FKBP-type domain maps to 161–246; sequence EDRVTIDFTG…LKKVEERELP (86 aa).

This sequence belongs to the FKBP-type PPIase family. Tig subfamily. In terms of assembly, homodimer and monomer. In vivo most of the ribosomes are in complex with monomeric TF. Uncomplexed TF, however, is in a monomer-dimer equilibrium with approximately two thirds of TF existing in a dimeric state.

It localises to the cytoplasm. The catalysed reaction is [protein]-peptidylproline (omega=180) = [protein]-peptidylproline (omega=0). Its function is as follows. Involved in protein export. Acts as a chaperone by maintaining the newly synthesized protein in an open conformation. Functions as a peptidyl-prolyl cis-trans isomerase. The sequence is that of Trigger factor from Shigella dysenteriae serotype 1 (strain Sd197).